Reading from the N-terminus, the 150-residue chain is MNTNTLLLENKKAKFNYFIEEKVSCGIVLKGTEVKSIKAKKLSFNNSFASIKKEEFWLENLHVSKYKEGNIFNHDELRPRKLLIKKQELQRLKKFKEKEGYTLIPISFYLKKSIIKVEVGICKGKKLYDKREILKQKSIKKDLSREIKYK.

The protein belongs to the SmpB family.

The protein localises to the cytoplasm. Functionally, required for rescue of stalled ribosomes mediated by trans-translation. Binds to transfer-messenger RNA (tmRNA), required for stable association of tmRNA with ribosomes. tmRNA and SmpB together mimic tRNA shape, replacing the anticodon stem-loop with SmpB. tmRNA is encoded by the ssrA gene; the 2 termini fold to resemble tRNA(Ala) and it encodes a 'tag peptide', a short internal open reading frame. During trans-translation Ala-aminoacylated tmRNA acts like a tRNA, entering the A-site of stalled ribosomes, displacing the stalled mRNA. The ribosome then switches to translate the ORF on the tmRNA; the nascent peptide is terminated with the 'tag peptide' encoded by the tmRNA and targeted for degradation. The ribosome is freed to recommence translation, which seems to be the essential function of trans-translation. The protein is SsrA-binding protein of Borrelia garinii subsp. bavariensis (strain ATCC BAA-2496 / DSM 23469 / PBi) (Borreliella bavariensis).